Consider the following 296-residue polypeptide: Nucleotide-binding protein spyM18_0713 (296 aa).

13–20 is a binding site for ATP; sequence GMSGAGKT. GTP is bound at residue 63–66; it reads DMRS.

This sequence belongs to the RapZ-like family.

Displays ATPase and GTPase activities. The sequence is that of Nucleotide-binding protein spyM18_0713 from Streptococcus pyogenes serotype M18 (strain MGAS8232).